A 262-amino-acid polypeptide reads, in one-letter code: Abhydrolase domain-containing protein AKT2 (262 aa).

A Peroxisomal targeting signal type 1 motif is present at residues 260–262 (SKL).

This sequence belongs to the AB hydrolase superfamily. AKT2 hydrolase family.

Its subcellular location is the peroxisome. It functions in the pathway mycotoxin biosynthesis. Functionally, abhydrolase domain-containing protein; part of the gene clusters that mediate the biosynthesis of the host-selective toxins (HSTs) AK-toxins responsible for Japanese pear black spot disease by the Japanese pear pathotype. AK-toxins are esters of 9,10-epoxy 8-hydroxy 9-methyldecatrienoic acid (EDA). On cellular level, AK-toxins affect plasma membrane of susceptible cells and cause a sudden increase in loss of K(+) after a few minutes of toxin treatment. The acyl-CoA ligase AKT1, the hydrolase AKT2 and enoyl-CoA hydratase AKT3 are all involved in the biosynthesis of the AK-, AF- and ACT-toxin common 9,10-epoxy-8-hydroxy-9-methyl-decatrienoic acid (EDA) structural moiety. Part of the EDA biosynthesis occurs in the peroxisome since these 3 enzymes are localized in peroxisomes. The exact roles of the 3 enzymes, as well as of additional AK-toxin clusters enzymes, including AKT4, AKT6 and AKTS1, have still to be elucidated. The Cytochrome P450 monooxygenase AKT7 on the other side functions to limit production of EDA and AK-toxin, probably via the catalysis of a side reaction of EDA or its precursor. The protein is Abhydrolase domain-containing protein AKT2 of Alternaria alternata (Alternaria rot fungus).